A 634-amino-acid chain; its full sequence is Kelch-like protein 31 (634 aa).

Ala-2 is subject to N,N,N-trimethylalanine. The BTB domain maps to 73–137 (CDLVIGTKTK…AYTGKLTLSL (65 aa)). The BACK domain occupies 172-273 (CMYVVNIAET…SAQDLVNYVQ (102 aa)). 6 Kelch repeats span residues 317–365 (VLVT…VMDG), 366–419 (FLYV…VFNG), 420–466 (LVYA…VADG), 468–513 (VLVT…TLSD), 515–565 (VYVM…ALHG), and 567–614 (AYLV…TLSM).

Post-translationally, N-terminus is methylated by METTL11A/NTM1. As to expression, strongly expressed in skeletal muscle and weakly in heart. According to PubMed:15302408, not expressed in other tissues. According to PubMed:18719355, abundantly expressed in both embryonic skeletal and heart tissues.

Functionally, transcriptional repressor in MAPK/JNK signaling pathway to regulate cellular functions. Overexpression inhibits the transcriptional activities of both the TPA-response element (TRE) and serum response element (SRE). The polypeptide is Kelch-like protein 31 (KLHL31) (Homo sapiens (Human)).